The primary structure comprises 446 residues: MPETYWGKAREFLSKHNLDVGDIIELEKNGIQVKGIIMPTYSNNDDIIVLKLDNGYNIGISVSNIQNVKLIEKKRKEEKRREGAVSTTNSEVMIISTGGTIVSKIEYETGAVRPALTPDEIIEFMPEIKEIARIDAEILFSILSENMKPEYWIKIAEEAKKALDKGNKGVVIAHGTDTMAYTSAALSFSFRKMTGPIVLVGSQRSSDRPSSDSSMNLLTSILVAKNAPFGEVVVNMHGESSDTYTLVHRGVKVRKMHTSRRDAFQSINDLPLAKVHYIDKKIEILSDNYRSKESENTLDAKFDNRVFLLKYYPGLSPDMVEHLISSGIRGIIIEGTGLGHTSSDFYEVFKKASKDGVFIGMTSQCLFGRVNMNVYTTGRLLQEAGVVPLEDMLPETALVKLMWTLAHENDLDRIKEIMLTNLAGEINYIHHYEMFPRWYHDRIRLQ.

An Asparaginase/glutaminase domain is found at 90-421; the sequence is SEVMIISTGG…DRIKEIMLTN (332 aa). Active-site residues include Thr-100, Thr-176, Asp-177, and Lys-255.

This sequence belongs to the asparaginase 1 family. GatD subfamily. As to quaternary structure, heterodimer of GatD and GatE.

The enzyme catalyses L-glutamyl-tRNA(Gln) + L-glutamine + ATP + H2O = L-glutaminyl-tRNA(Gln) + L-glutamate + ADP + phosphate + H(+). Functionally, allows the formation of correctly charged Gln-tRNA(Gln) through the transamidation of misacylated Glu-tRNA(Gln) in organisms which lack glutaminyl-tRNA synthetase. The reaction takes place in the presence of glutamine and ATP through an activated gamma-phospho-Glu-tRNA(Gln). The GatDE system is specific for glutamate and does not act on aspartate. The sequence is that of Glutamyl-tRNA(Gln) amidotransferase subunit D from Sulfolobus acidocaldarius (strain ATCC 33909 / DSM 639 / JCM 8929 / NBRC 15157 / NCIMB 11770).